The primary structure comprises 89 residues: Small ribosomal subunit protein uS15 (89 aa).

Positions 1 to 20 are enriched in basic and acidic residues; sequence MSITAERKAELIKTHARGEA. Positions 1 to 24 are disordered; sequence MSITAERKAELIKTHARGEADTGS.

Belongs to the universal ribosomal protein uS15 family. As to quaternary structure, part of the 30S ribosomal subunit. Forms a bridge to the 50S subunit in the 70S ribosome, contacting the 23S rRNA.

Functionally, one of the primary rRNA binding proteins, it binds directly to 16S rRNA where it helps nucleate assembly of the platform of the 30S subunit by binding and bridging several RNA helices of the 16S rRNA. In terms of biological role, forms an intersubunit bridge (bridge B4) with the 23S rRNA of the 50S subunit in the ribosome. This Phenylobacterium zucineum (strain HLK1) protein is Small ribosomal subunit protein uS15.